The chain runs to 549 residues: Probable protein kinase UbiB (549 aa).

The 379-residue stretch at 123 to 501 folds into the Protein kinase domain; that stretch reads DFDETPLASA…QQQAHKSNYM (379 aa). ATP contacts are provided by residues 129 to 137 and Lys-152; that span reads LASASISQV. Asp-287 acts as the Proton acceptor in catalysis. The next 2 helical transmembrane spans lie at 499–516 and 521–540; these read NYML…TLLF and TLWS…FIGW.

This sequence belongs to the ABC1 family. UbiB subfamily.

The protein resides in the cell inner membrane. The protein operates within cofactor biosynthesis; ubiquinone biosynthesis [regulation]. Its function is as follows. Is probably a protein kinase regulator of UbiI activity which is involved in aerobic coenzyme Q (ubiquinone) biosynthesis. This is Probable protein kinase UbiB from Shewanella sp. (strain W3-18-1).